The chain runs to 416 residues: Prostacyclin receptor (416 aa).

The Extracellular portion of the chain corresponds to 1 to 45 (MVASGGRPDGPPSITPESPLIVGGREWQGMAGSCWNITYVQDSVG). Intrachain disulfides connect cysteine 34-cysteine 194 and cysteine 121-cysteine 199. N-linked (GlcNAc...) asparagine glycosylation is present at asparagine 36. Residues 46-67 (PATSTLMFVAGVVGNGLALGIL) traverse the membrane as a helical segment. Over 68 to 80 (GARRRSHPSAFAV) the chain is Cytoplasmic. Residues 81–105 (LVTGLAVTDLLGTCFLSPAVFVAYA) traverse the membrane as a helical segment. At 106-123 (RNSSLLGLAHGGTMLCDT) the chain is on the extracellular side. A helical transmembrane segment spans residues 124–144 (FAFAMTFFGLASTLILFAMAV). Topologically, residues 145–163 (ERCLALSHPYLYAQLDGPR) are cytoplasmic. Residues 164-187 (CARLALPAIYAFCCLFCSLPLLGL) form a helical membrane-spanning segment. The Extracellular segment spans residues 188–215 (GEHQQYCPGSWCFIRMRSPQPGGCAFSL). The helical transmembrane segment at 216–237 (AYASLMALLVTSIFFCNGSVTL) threads the bilayer. The Cytoplasmic segment spans residues 238-264 (SLCHMYRQQRRHHGSFVPTSRAREDEV). A helical membrane pass occupies residues 265–289 (YHLILLALMTGIMAVCSLPLTIRGF). Residues 290 to 302 (TQAIAPDSREMGD) lie on the Extracellular side of the membrane. Residues 303–323 (LHAFRFNAFNPILDPWVFILF) traverse the membrane as a helical segment. Residues 324–416 (RKAVFQRLKF…TEAVVACSLC (93 aa)) lie on the Cytoplasmic side of the membrane. At serine 366 the chain carries Phosphoserine. Residue cysteine 413 is modified to Cysteine methyl ester. The S-farnesyl cysteine moiety is linked to residue cysteine 413. Residues 414–416 (SLC) constitute a propeptide, removed in mature form.

The protein belongs to the G-protein coupled receptor 1 family. Interacts (non-isoprenylated C-terminus) with PDZK1. Post-translationally, isoprenylation does not influence ligand binding but is required for efficient coupling to the effectors adenylyl cyclase and phospholipase C.

Its subcellular location is the cell membrane. Receptor for prostacyclin (prostaglandin I2 or PGI2). The activity of this receptor is mediated by G(s) proteins which activate adenylate cyclase. This is Prostacyclin receptor (Ptgir) from Rattus norvegicus (Rat).